The primary structure comprises 275 residues: MSQKRQTKFQNGKSKTSENSSAKREKGMVVNSKEISDAVGQSKFVLENLRHYTVHPNLAQYYKPLKATALQKFLAQNRKNTSFMLKVTQYDQDKTLLIMTNNPPPCSITQQDKESASKYFSKELLLKVMESHHQHKPTENLWLPRMPQKKKLRSKLKPIFPLILSDDPTSKREQWFRFSTDNDFKSEGKYSKVYALRTQKKMYPQLTFAPVHERDMRKDASKKSASERPISKVIREPLTLASLLEDMPTRTAPGESAFRNGRAPQWIIKKATVIG.

Positions 1 to 20 are enriched in polar residues; that stretch reads MSQKRQTKFQNGKSKTSENS. The segment at 1–28 is disordered; sequence MSQKRQTKFQNGKSKTSENSSAKREKGM.

As to expression, testis-specific.

The sequence is that of Testis-specific gene 13 protein (TSGA13) from Homo sapiens (Human).